The sequence spans 429 residues: Adenylosuccinate synthetase (429 aa).

GTP contacts are provided by residues 12–18 (GDEGKGK) and 40–42 (GHT). Aspartate 13 (proton acceptor) is an active-site residue. 2 residues coordinate Mg(2+): aspartate 13 and glycine 40. Residues 13–16 (DEGK), 38–41 (NAGH), threonine 128, arginine 142, glutamine 223, threonine 238, and arginine 302 each bind IMP. Histidine 41 (proton donor) is an active-site residue. Residue 298 to 304 (TVTGRPR) participates in substrate binding. Residues arginine 304, 330–332 (LLD), and 412–414 (SVG) contribute to the GTP site.

This sequence belongs to the adenylosuccinate synthetase family. As to quaternary structure, homodimer. Mg(2+) is required as a cofactor.

The protein resides in the cytoplasm. The catalysed reaction is IMP + L-aspartate + GTP = N(6)-(1,2-dicarboxyethyl)-AMP + GDP + phosphate + 2 H(+). It functions in the pathway purine metabolism; AMP biosynthesis via de novo pathway; AMP from IMP: step 1/2. Functionally, plays an important role in the de novo pathway of purine nucleotide biosynthesis. Catalyzes the first committed step in the biosynthesis of AMP from IMP. This Lactobacillus helveticus (strain DPC 4571) protein is Adenylosuccinate synthetase.